A 113-amino-acid polypeptide reads, in one-letter code: Large ribosomal subunit protein P2 (113 aa).

Positions 60 to 113 (SKVSSLSAGAGPSGGAAAAGADAGAAEAEKEEEPQEEEADVNMGDIFGGDDEDY) are disordered. Low complexity predominate over residues 74–85 (GAAAAGADAGAA). A compositionally biased stretch (acidic residues) spans 88-99 (EKEEEPQEEEAD).

This sequence belongs to the eukaryotic ribosomal protein P1/P2 family. As to quaternary structure, P1 and P2 exist as dimers at the large ribosomal subunit. Phosphorylated.

Functionally, plays an important role in the elongation step of protein synthesis. The sequence is that of Large ribosomal subunit protein P2 from Euplotes raikovi.